The sequence spans 226 residues: MDKVRTVSDSKRDFYTKHTRPINSVYRRVVEELMVEMHLLSVNSDFQYDPVYALGVVTSFQRFMQGYRPDADKESIFNALCQSVGGDPQQYRQDAERMIESAKQLSAQQLLFNLESASDSSSGENQILQTLIGIANAPKYKYTRLFAIGIYTILAETDPEMLKNTEKREEVVKQIAKVLHLPEEKMQKDLDLYRSNLEKMDQLLTVIEEALQADRKKREQQKIMDN.

The stretch at 183 to 213 (EEKMQKDLDLYRSNLEKMDQLLTVIEEALQA) forms a coiled coil.

It belongs to the THF1 family.

Its function is as follows. May be involved in photosynthetic membrane biogenesis. In Gloeothece citriformis (strain PCC 7424) (Cyanothece sp. (strain PCC 7424)), this protein is Protein Thf1.